Consider the following 360-residue polypeptide: Phospho-N-acetylmuramoyl-pentapeptide-transferase (360 aa).

The next 10 helical transmembrane spans lie at Arg24–Ile44, Gly69–Trp89, Trp92–Phe112, Met133–Asn153, Ile158–Val178, Gly199–Ser219, Val239–Tyr259, Val263–Ile283, Phe288–Val308, and Gln337–Leu357.

It belongs to the glycosyltransferase 4 family. MraY subfamily. Mg(2+) serves as cofactor.

It is found in the cell inner membrane. It carries out the reaction UDP-N-acetyl-alpha-D-muramoyl-L-alanyl-gamma-D-glutamyl-meso-2,6-diaminopimeloyl-D-alanyl-D-alanine + di-trans,octa-cis-undecaprenyl phosphate = di-trans,octa-cis-undecaprenyl diphospho-N-acetyl-alpha-D-muramoyl-L-alanyl-D-glutamyl-meso-2,6-diaminopimeloyl-D-alanyl-D-alanine + UMP. Its pathway is cell wall biogenesis; peptidoglycan biosynthesis. Functionally, catalyzes the initial step of the lipid cycle reactions in the biosynthesis of the cell wall peptidoglycan: transfers peptidoglycan precursor phospho-MurNAc-pentapeptide from UDP-MurNAc-pentapeptide onto the lipid carrier undecaprenyl phosphate, yielding undecaprenyl-pyrophosphoryl-MurNAc-pentapeptide, known as lipid I. This is Phospho-N-acetylmuramoyl-pentapeptide-transferase from Neisseria gonorrhoeae (strain ATCC 700825 / FA 1090).